The chain runs to 130 residues: Probable pilin MJ0835.1 (130 aa).

The propeptide occupies 1–14 (MNTMENKIIKSKKA). The QXSXEXXXL motif lies at 15–23 (QVSLEFSFL).

Post-translationally, the N-terminus is cleaved by the prepilin peptidase EppA, which recognizes the class III signal sequence.

It localises to the secreted. Its subcellular location is the cell surface. It is found in the fimbrium. This Methanocaldococcus jannaschii (strain ATCC 43067 / DSM 2661 / JAL-1 / JCM 10045 / NBRC 100440) (Methanococcus jannaschii) protein is Probable pilin MJ0835.1.